A 468-amino-acid chain; its full sequence is Zinc-regulated transporter 1 (468 aa).

The signal sequence occupies residues 1 to 17 (MKFTHLFFIGLLTKVYT). Over 18–185 (ETVTVLSTRS…VKRDYDIPLR (168 aa)) the chain is Extracellular. N-linked (GlcNAc...) asparagine glycosylation is found at Asn-57 and Asn-67. The chain crosses the membrane as a helical span at residues 186–206 (IGLLFVILVTSGIGSFGPIVL). The Cytoplasmic portion of the chain corresponds to 207 to 217 (KQFVNLSQENY). Residues 218–238 (IIVIIKQFGTGIIISTAFVHL) form a helical membrane-spanning segment. At 239–257 (MTHAQLMWSNSCLKIKYEG) the chain is on the extracellular side. The helical transmembrane segment at 258–278 (TGASITMAGIFIAFIIEYIAL) threads the bilayer. At 279-314 (RIVNARDTGKVDKKEIEETSSNEQSLHGISVNDKIS) the chain is on the cytoplasmic side. A helical transmembrane segment spans residues 315-335 (VMILEAGIIFHSILIGITLVV). At 336–338 (TDD) the chain is on the extracellular side. Residues 339 to 359 (VYFITLFIVIVFHQFFEGLAL) traverse the membrane as a helical segment. At 360-374 (SSRIISITNASLSTK) the chain is on the cytoplasmic side. A helical membrane pass occupies residues 375–395 (LVMALMFALITPIGMAIGIGV). Topologically, residues 396–406 (LNKFNGNDPST) are extracellular. A helical transmembrane segment spans residues 407–427 (LIALGTLDSFSAGVLLWTGLI). Residues 428 to 447 (EMWSHDWLHGHLRNSSFVKT) lie on the Cytoplasmic side of the membrane. A helical transmembrane segment spans residues 448-468 (TVALVSLILGMLLMSLLGNWA).

Belongs to the ZIP transporter (TC 2.A.5) family.

It is found in the cell membrane. It catalyses the reaction Zn(2+)(in) = Zn(2+)(out). Its function is as follows. Zinc transporter that acts with PRA1 in sequestration of zinc from host tissues during infection. The pH-regulated antigen 1 (PRA1) binds zinc from its environment and then reassociates with ZRT1 to acquire this essential metal. This is Zinc-regulated transporter 1 (ZRT101) from Candida albicans (strain SC5314 / ATCC MYA-2876) (Yeast).